A 138-amino-acid polypeptide reads, in one-letter code: MLSPKRTKFRKAHKGRIKGVTKGGSALNFGAYGLKALEPERITARQIEAARRALTRHMKRQGRVWIRIFPDLPVSSKPAEVRMGSGKGAPEFWTARVAPGRILFEVDGVAEEIARHGFALAAAKLPIKTKFISRIGDI.

It belongs to the universal ribosomal protein uL16 family. In terms of assembly, part of the 50S ribosomal subunit.

Binds 23S rRNA and is also seen to make contacts with the A and possibly P site tRNAs. This is Large ribosomal subunit protein uL16 from Paramagnetospirillum magneticum (strain ATCC 700264 / AMB-1) (Magnetospirillum magneticum).